A 515-amino-acid chain; its full sequence is Cytochrome P450 monooxygenase janP (515 aa).

The chain crosses the membrane as a helical span at residues 20–36; it reads GFLWKYAAFMVFIYLLL. Cys456 serves as a coordination point for heme. Asn501 carries N-linked (GlcNAc...) asparagine glycosylation.

The protein belongs to the cytochrome P450 family. Heme is required as a cofactor.

The protein localises to the membrane. Its pathway is secondary metabolite biosynthesis. Cytochrome P450 monooxygenase; part of the gene cluster that mediates the biosynthesis of the indole diterpenes janthitremanes such as shearinine K or shearinine A. The geranylgeranyl diphosphate (GGPP) synthase janG catalyzes the first step in janthitremane biosynthesis via conversion of farnesyl pyrophosphate and isopentyl pyrophosphate into geranylgeranyl pyrophosphate (GGPP). Condensation of indole-3-glycerol phosphate with GGPP by the prenyl transferase janC then forms 3-geranylgeranylindole (3-GGI). Epoxidation by the FAD-dependent monooxygenase janM leads to a epoxidized-GGI that is substrate of the terpene cyclase janB for cyclization to yield paspaline. Paspaline is subsequently converted to 13-desoxypaspaline by the cytochrome P450 monooxygenase janP, via beta-PC-M6 in a series of alpha-face oxidations. The cytochrome P450 monooxygenase janQ is proposed to carry out sequential beta-face oxidation steps at C-7 and C-13 of 13-desoxypaspaline to form paspalicine and paspalinine respectively. The indole diterpene prenyltransferase janD may then convert paspalinine into shearinine K which is substrate of janO and/or additional enzymes for oxidation and cyclization to generate shearinine A. In Penicillium janthinellum (Penicillium vitale), this protein is Cytochrome P450 monooxygenase janP.